Reading from the N-terminus, the 103-residue chain is Small ribosomal subunit protein uS10 (103 aa).

It belongs to the universal ribosomal protein uS10 family. In terms of assembly, part of the 30S ribosomal subunit.

In terms of biological role, involved in the binding of tRNA to the ribosomes. The protein is Small ribosomal subunit protein uS10 of Shewanella baltica (strain OS223).